A 119-amino-acid chain; its full sequence is Non-specific lipid-transfer protein 11 (119 aa).

An N-terminal signal peptide occupies residues 1–28; sequence MRNITTTTRKMLLLVITILLGIAYHGEA. Intrachain disulfides connect Cys31–Cys78, Cys41–Cys55, Cys56–Cys101, and Cys76–Cys115.

The protein belongs to the plant LTP family.

In terms of biological role, plant non-specific lipid-transfer proteins transfer phospholipids as well as galactolipids across membranes. May play a role in wax or cutin deposition in the cell walls of expanding epidermal cells and certain secretory tissues. In Arabidopsis thaliana (Mouse-ear cress), this protein is Non-specific lipid-transfer protein 11 (LTP11).